The sequence spans 418 residues: Actin-related protein 3 (418 aa).

The residue at position 1 (Met1) is an N-acetylmethionine.

Belongs to the actin family. ARP3 subfamily. As to quaternary structure, component of the Arp2/3 complex composed of arpB/Arp2, arpC/Arp3, arcA/p41-arc, arcB/p34-arc, arcC/p21-arc, arcD/p20-arc and arcE/p16-arc. Interacts with carmil (via the region between the LRR domain and COOH-terminal proline-rich domain); carmil is required for Arp2/3-dependent actin nucleation. Arp2/3 complex, MyoB, MyoC, and the alpha and beta subunits of capping protein all form a larger complex with carmil.

It is found in the cytoplasm. It localises to the cytoskeleton. The protein localises to the cytosol. Its subcellular location is the cell cortex. The protein resides in the cell projection. It is found in the pseudopodium. In terms of biological role, functions as ATP-binding component of the Arp2/3 complex which is involved in regulation of actin polymerization and together with an activating nucleation-promoting factor (NPF) mediates the formation of branched actin networks. Seems to contact the pointed end of the daughter actin filament. The Arp2/3 complex is involved in organizing the actin system in cell motility and chemotaxis, in phagocytosis and macropinocytosis, at late steps of endosome processing, and in mitosis. In concert with a group of other proteins, the Arp2/3 complex plays a general role in the rapid activation and adaptation of the actin system to its multiple functions. This Dictyostelium discoideum (Social amoeba) protein is Actin-related protein 3 (arpC).